The primary structure comprises 178 residues: uncharacterized protein (178 aa).

Disordered stretches follow at residues 89–115 (NEEQ…RLSI) and 136–178 (DMPT…EIKA). Residues 98 to 109 (ASHGSTSSATST) are compositionally biased toward low complexity. Positions 167-178 (DSDEEEEEEIKA) are enriched in acidic residues.

The protein localises to the cytoplasm. It localises to the nucleus. This is an uncharacterized protein from Schizosaccharomyces pombe (strain 972 / ATCC 24843) (Fission yeast).